Reading from the N-terminus, the 77-residue chain is Large ribosomal subunit protein bL28 (77 aa).

The segment at 1–21 (MARVCKVTGKRPMTGNNVSHA) is disordered.

It belongs to the bacterial ribosomal protein bL28 family.

In Chromobacterium violaceum (strain ATCC 12472 / DSM 30191 / JCM 1249 / CCUG 213 / NBRC 12614 / NCIMB 9131 / NCTC 9757 / MK), this protein is Large ribosomal subunit protein bL28.